The chain runs to 798 residues: Protocadherin beta-10 (798 aa).

An N-terminal signal peptide occupies residues 1–26; the sequence is MAVRELCFSRQRQVLFLFLFWGVSLA. The Extracellular segment spans residues 27-690; it reads GSGFGRYSVT…AQADLLTVYL (664 aa). Cadherin domains are found at residues 35 to 133, 138 to 242, 247 to 347, 352 to 451, and 456 to 561; these read VTEE…APVF, TVLK…APQF, YETQ…PPEL, FSNS…APAF, and YTLF…SPFV. An N-linked (GlcNAc...) asparagine glycan is attached at asparagine 169. Asparagine 418 and asparagine 436 each carry an N-linked (GlcNAc...) asparagine glycan. A glycan (N-linked (GlcNAc...) asparagine) is linked at asparagine 567. The Cadherin 6 domain occupies 568–671; sequence GSAPCTELVP…LVDGFSQPYL (104 aa). Residues 691-711 traverse the membrane as a helical segment; it reads VVALASVSSLFLFSVLLFVAV. At 712–798 the chain is on the cytoplasmic side; the sequence is RLCRRSRAAS…FRNSFGFNIQ (87 aa).

The protein localises to the cell membrane. Functionally, potential calcium-dependent cell-adhesion protein. May be involved in the establishment and maintenance of specific neuronal connections in the brain. This chain is Protocadherin beta-10 (PCDHB10), found in Pan troglodytes (Chimpanzee).